Here is a 510-residue protein sequence, read N- to C-terminus: Protein PLASTID TRANSCRIPTIONALLY ACTIVE 16, chloroplastic (510 aa).

Residues 1–14 show a composition bias toward polar residues; that stretch reads MASSSTSFPLTTAP. Residues 1-19 constitute a chloroplast transit peptide; that stretch reads MASSSTSFPLTTAPPQGVR. Disordered stretches follow at residues 1–24 and 38–58; these read MASS…NRRK and LGKT…NPFQ. A compositionally biased stretch (basic and acidic residues) spans 41–51; that stretch reads TKGDDDSEGKQ. NADP(+) is bound at residue 94-123; the sequence is IFVAGATGQAGIRIAQTLLQRGFSVRAGVP. Residues 354–403 are a coiled coil; it reads ARERAEEEAKVAADKAREAAEAAKEFEKQMQKLSEKEAEAASLAEDAQQK. Ser395 carries the phosphoserine modification. Residue Thr451 is modified to Phosphothreonine; by STN7. The tract at residues 453 to 493 is disordered; that stretch reads RGQAKARNLPPKKAVVKQRPSSPFASKPKEERPKKPEKEVR. Residues 479-493 are compositionally biased toward basic and acidic residues; it reads KPKEERPKKPEKEVR.

Belongs to the NAD(P)-dependent epimerase/dehydratase family. In terms of assembly, component of the plastid transcriptionally active chromosome required for plastid gene expression. Interacts with DEGP1 under high light conditions and maybe its degradation target. Post-translationally, excluded from chloroplast nucleoid when phosphorylated on Thr-451 by STN7 that may regulate membrane-anchoring functions of the nucleoid.

The protein resides in the plastid. It localises to the chloroplast stroma. Its subcellular location is the chloroplast nucleoid. It is found in the chloroplast thylakoid membrane. Functionally, probably involved in the regulation of plastid gene expression. This chain is Protein PLASTID TRANSCRIPTIONALLY ACTIVE 16, chloroplastic, found in Arabidopsis thaliana (Mouse-ear cress).